A 121-amino-acid polypeptide reads, in one-letter code: Large ribosomal subunit protein bL19 (121 aa).

It belongs to the bacterial ribosomal protein bL19 family.

This protein is located at the 30S-50S ribosomal subunit interface and may play a role in the structure and function of the aminoacyl-tRNA binding site. The sequence is that of Large ribosomal subunit protein bL19 from Acidothermus cellulolyticus (strain ATCC 43068 / DSM 8971 / 11B).